The following is a 310-amino-acid chain: MNSIFTEENLLAFTTAARFGSFSKAAEELGLTTSAISYTIKRMETGLDVVLFTRSTRSIELTESGRYFFRKATDLLNDFYAIKRRIDTISQGIEARVRICINQLLYTPKHTARLLQVLKKQFPTCQITVTTEVYNGVWDAIINNQANIAIGAPDTLLDGGGIDYTEIGAIRWAFAIAPDHPLAFVPEPIAESQLRLYPNIMVEDTAHTINKKVGWLLHGQESILVPDFNTKCQCQILGEGIGFLPDYMVREAMTQSLLVTRQIHNPRQDSRMLLATQHSATGQVTQWIKKQFAPNGILTGIYQDLLHREN.

An HTH lysR-type domain is found at 5–62; it reads FTEENLLAFTTAARFGSFSKAAEELGLTTSAISYTIKRMETGLDVVLFTRSTRSIELT. The segment at residues 22-42 is a DNA-binding region (H-T-H motif); sequence FSKAAEELGLTTSAISYTIKR.

The protein belongs to the LysR transcriptional regulatory family.

This is an uncharacterized protein from Escherichia coli (strain K12).